Here is a 353-residue protein sequence, read N- to C-terminus: DNA polymerase IV (353 aa).

The UmuC domain occupies 6–187 (IIHIDCDCFY…LPVTKLHGVG (182 aa)). Mg(2+) contacts are provided by Asp10 and Asp105. Residue Glu106 is part of the active site.

The protein belongs to the DNA polymerase type-Y family. Monomer. Mg(2+) is required as a cofactor.

It localises to the cytoplasm. It carries out the reaction DNA(n) + a 2'-deoxyribonucleoside 5'-triphosphate = DNA(n+1) + diphosphate. Functionally, poorly processive, error-prone DNA polymerase involved in untargeted mutagenesis. Copies undamaged DNA at stalled replication forks, which arise in vivo from mismatched or misaligned primer ends. These misaligned primers can be extended by PolIV. Exhibits no 3'-5' exonuclease (proofreading) activity. May be involved in translesional synthesis, in conjunction with the beta clamp from PolIII. This Pseudomonas syringae pv. tomato (strain ATCC BAA-871 / DC3000) protein is DNA polymerase IV.